A 332-amino-acid chain; its full sequence is Ribonucleoside-diphosphate reductase small chain C (332 aa).

Fe cation is bound by residues Asp-76, Glu-107, and His-110. Tyr-114 is a catalytic residue. Fe cation is bound by residues Glu-169, Glu-203, and His-206.

This sequence belongs to the ribonucleoside diphosphate reductase small chain family. Homodimer and heterodimer with RNR2A. Heterotetramer of two R1 and two R2 chains. Interacts with CSN7 (via C-terminal tail). It depends on Fe cation as a cofactor. Expressed in roots, cauline and rosette leaves, stems and flowers.

The protein resides in the cytoplasm. Its subcellular location is the nucleus. It carries out the reaction a 2'-deoxyribonucleoside 5'-diphosphate + [thioredoxin]-disulfide + H2O = a ribonucleoside 5'-diphosphate + [thioredoxin]-dithiol. Provides the precursors necessary for DNA synthesis. Catalyzes the biosynthesis of deoxyribonucleotides from the corresponding ribonucleotides. Involved in DNA damage repair and programmed cell death inhibition. This Arabidopsis thaliana (Mouse-ear cress) protein is Ribonucleoside-diphosphate reductase small chain C (TSO2).